Consider the following 211-residue polypeptide: Protein GrpE (211 aa).

Residues 1–43 (MTDETTKNGPDATAADAAADAAANVEIDNSVQEEAKQPDPLEL) are disordered. The span at 11-23 (DATAADAAADAAA) shows a compositional bias: low complexity. Residues 33–43 (EEAKQPDPLEL) show a composition bias toward basic and acidic residues.

Belongs to the GrpE family. In terms of assembly, homodimer.

It is found in the cytoplasm. Participates actively in the response to hyperosmotic and heat shock by preventing the aggregation of stress-denatured proteins, in association with DnaK and GrpE. It is the nucleotide exchange factor for DnaK and may function as a thermosensor. Unfolded proteins bind initially to DnaJ; upon interaction with the DnaJ-bound protein, DnaK hydrolyzes its bound ATP, resulting in the formation of a stable complex. GrpE releases ADP from DnaK; ATP binding to DnaK triggers the release of the substrate protein, thus completing the reaction cycle. Several rounds of ATP-dependent interactions between DnaJ, DnaK and GrpE are required for fully efficient folding. This Rhizobium etli (strain ATCC 51251 / DSM 11541 / JCM 21823 / NBRC 15573 / CFN 42) protein is Protein GrpE.